The primary structure comprises 250 residues: Hydroxyacylglutathione hydrolase (250 aa).

Zn(2+) contacts are provided by histidine 52, histidine 54, aspartate 56, histidine 57, histidine 107, aspartate 128, and histidine 166.

This sequence belongs to the metallo-beta-lactamase superfamily. Glyoxalase II family. As to quaternary structure, monomer. It depends on Zn(2+) as a cofactor.

The catalysed reaction is an S-(2-hydroxyacyl)glutathione + H2O = a 2-hydroxy carboxylate + glutathione + H(+). Its pathway is secondary metabolite metabolism; methylglyoxal degradation; (R)-lactate from methylglyoxal: step 2/2. Functionally, thiolesterase that catalyzes the hydrolysis of S-D-lactoyl-glutathione to form glutathione and D-lactic acid. The chain is Hydroxyacylglutathione hydrolase from Neisseria gonorrhoeae (strain NCCP11945).